The primary structure comprises 290 residues: NAD kinase (290 aa).

Asp-72 acts as the Proton acceptor in catalysis. NAD(+) is bound by residues 72–73 (DG), 146–147 (NE), Arg-174, Asp-176, and 187–192 (TAYALS).

The protein belongs to the NAD kinase family. A divalent metal cation serves as cofactor.

The protein localises to the cytoplasm. The catalysed reaction is NAD(+) + ATP = ADP + NADP(+) + H(+). Functionally, involved in the regulation of the intracellular balance of NAD and NADP, and is a key enzyme in the biosynthesis of NADP. Catalyzes specifically the phosphorylation on 2'-hydroxyl of the adenosine moiety of NAD to yield NADP. The chain is NAD kinase from Methylococcus capsulatus (strain ATCC 33009 / NCIMB 11132 / Bath).